We begin with the raw amino-acid sequence, 447 residues long: uncharacterized protein (447 aa).

3 disordered regions span residues 1 to 80 (MTFE…EQSS), 115 to 184 (ATTQ…PNNP), and 295 to 322 (LQDN…SSGI). A compositionally biased stretch (basic and acidic residues) spans 11–32 (QRRDESAYRLGEEDGRQKGESS). Polar residues predominate over residues 42 to 51 (KNPSNVSFWS). The span at 61–72 (VKTDRPQFHRAD) shows a compositional bias: basic and acidic residues. The segment covering 115–158 (ATTQSSPISTSFNPQLPSNSNTNRFDFGSESQLSSNYTNDTGLS) has biased composition (polar residues). The segment covering 300-321 (SLTSQGSNLSSQNSGLSSSSSG) has biased composition (low complexity). 2 helical membrane passes run 385-405 (FMFL…ASFL) and 424-444 (IINR…IGLG).

It localises to the membrane. This is an uncharacterized protein from Schizosaccharomyces pombe (strain 972 / ATCC 24843) (Fission yeast).